The chain runs to 222 residues: ATP-dependent dethiobiotin synthetase BioD 2 (222 aa).

Residue Thr17 coordinates Mg(2+). Residue Lys38 is part of the active site. Thr42 lines the substrate pocket. Asp55 and Glu112 together coordinate Mg(2+). Residues Asp55, 112–115, 172–173, 201–203, and Glu208 contribute to the ATP site; these read EGCG, NR, and PYL.

The protein belongs to the dethiobiotin synthetase family. As to quaternary structure, homodimer. Mg(2+) is required as a cofactor.

The protein localises to the cytoplasm. The catalysed reaction is (7R,8S)-7,8-diammoniononanoate + CO2 + ATP = (4R,5S)-dethiobiotin + ADP + phosphate + 3 H(+). It participates in cofactor biosynthesis; biotin biosynthesis; biotin from 7,8-diaminononanoate: step 1/2. Functionally, catalyzes a mechanistically unusual reaction, the ATP-dependent insertion of CO2 between the N7 and N8 nitrogen atoms of 7,8-diaminopelargonic acid (DAPA, also called 7,8-diammoniononanoate) to form a ureido ring. This Yersinia pestis protein is ATP-dependent dethiobiotin synthetase BioD 2.